Consider the following 551-residue polypeptide: Protein PLASTID TRANSCRIPTIONALLY ACTIVE 12, chloroplastic (551 aa).

The transit peptide at 1–47 (MASCSRTWLLPGMAPQATAQTVPRPLQSLKVFAGLPHRRRVLFSGVS) directs the protein to the chloroplast. 2 disordered regions span residues 76–161 (SSYF…EGES) and 463–529 (HSYN…DQLS). Residues 109–119 (RVRAARAPAPV) show a composition bias toward low complexity. 2 stretches are compositionally biased toward acidic residues: residues 467-476 (EDSDDDEEDA) and 485-498 (SLED…DAED). The segment covering 505 to 516 (RNWSVLKTTGQA) has biased composition (polar residues). The span at 518-529 (NPKEKSKKDQLS) shows a compositional bias: basic and acidic residues.

Component of the plastid-encoded plastid RNA polymerase (PEP) complex.

The protein resides in the plastid. It localises to the chloroplast. Its function is as follows. Required for the activity of the plastid-encoded RNA polymerase (PEP) and full expression of genes transcribed by PEP. Required for the proper build-up and formation of the PEP-complex. Binds single-stranded (ss) DNA and RNA, but not double-stranded (ds) DNA. In Oryza sativa subsp. japonica (Rice), this protein is Protein PLASTID TRANSCRIPTIONALLY ACTIVE 12, chloroplastic.